A 216-amino-acid chain; its full sequence is Probable nicotinate-nucleotide adenylyltransferase (216 aa).

The protein belongs to the NadD family.

The enzyme catalyses nicotinate beta-D-ribonucleotide + ATP + H(+) = deamido-NAD(+) + diphosphate. It functions in the pathway cofactor biosynthesis; NAD(+) biosynthesis; deamido-NAD(+) from nicotinate D-ribonucleotide: step 1/1. In terms of biological role, catalyzes the reversible adenylation of nicotinate mononucleotide (NaMN) to nicotinic acid adenine dinucleotide (NaAD). The polypeptide is Probable nicotinate-nucleotide adenylyltransferase (Geobacillus thermodenitrificans (strain NG80-2)).